Consider the following 119-residue polypeptide: NADH-quinone oxidoreductase subunit A (119 aa).

A run of 3 helical transmembrane segments spans residues 9–29 (VLLF…LGYV), 63–83 (LVAI…PWAV), and 88–108 (VGGA…VGFV).

This sequence belongs to the complex I subunit 3 family. In terms of assembly, NDH-1 is composed of 14 different subunits. Subunits NuoA, H, J, K, L, M, N constitute the membrane sector of the complex.

It is found in the cell inner membrane. The enzyme catalyses a quinone + NADH + 5 H(+)(in) = a quinol + NAD(+) + 4 H(+)(out). NDH-1 shuttles electrons from NADH, via FMN and iron-sulfur (Fe-S) centers, to quinones in the respiratory chain. The immediate electron acceptor for the enzyme in this species is believed to be ubiquinone. Couples the redox reaction to proton translocation (for every two electrons transferred, four hydrogen ions are translocated across the cytoplasmic membrane), and thus conserves the redox energy in a proton gradient. In Delftia acidovorans (strain DSM 14801 / SPH-1), this protein is NADH-quinone oxidoreductase subunit A.